Consider the following 175-residue polypeptide: Small ribosomal subunit protein uS5 (175 aa).

The segment at 1–21 (MAKPERNKKPQQAEERDDGMR) is disordered. The S5 DRBM domain maps to 20–83 (MREKMVAVNR…EEARRKMAKV (64 aa)).

The protein belongs to the universal ribosomal protein uS5 family. Part of the 30S ribosomal subunit. Contacts proteins S4 and S8.

Functionally, with S4 and S12 plays an important role in translational accuracy. Its function is as follows. Located at the back of the 30S subunit body where it stabilizes the conformation of the head with respect to the body. The protein is Small ribosomal subunit protein uS5 of Dechloromonas aromatica (strain RCB).